The primary structure comprises 87 residues: Small ribosomal subunit protein uS17 (87 aa).

The protein belongs to the universal ribosomal protein uS17 family. As to quaternary structure, part of the 30S ribosomal subunit.

Functionally, one of the primary rRNA binding proteins, it binds specifically to the 5'-end of 16S ribosomal RNA. This is Small ribosomal subunit protein uS17 from Bacillus mycoides (strain KBAB4) (Bacillus weihenstephanensis).